The following is a 443-amino-acid chain: Packaging protein 1 (443 aa).

Residues 1 to 75 (MSGAADGTVP…PEAAQPPPSR (75 aa)) form a disordered region. The span at 13–56 (EDTHQEDSGERECEQRPVHSGREATGESDPALERPDHGERHGPE) shows a compositional bias: basic and acidic residues. 169–176 (GPTGSGKS) is an ATP binding site. Residues 433–443 (VSYANKRKWYD) form a DNA-binding region.

This sequence belongs to the adenoviridae packaging protein 1 family. Homodimer. Part of a genome packaging complex composed of packaging proteins 1, 2 and 3; this complex specifically binds to the packaging sequence on the left end of viral genomic DNA and performs packaging of the viral genome. Interacts with protein 33K.

Its subcellular location is the virion. The protein localises to the host nucleus. It is found in the host nucleoplasm. It localises to the host nucleolus. Functionally, component of the packaging machinery which encapsidates the viral DNA into preformed capsids and transcriptional activator of the viral major late promoter (MLP). Binds, along with packaging proteins 2 and 3, to the specific packaging sequence on the left end of viral genomic DNA and displays ATPase activity thereby providing the power stroke of the packaging machinery. The activity of packaging protein IVa2 is stimulated by protein 33K which acts as a terminase. May be the protein that pumps DNA into the capsid powered by ATP hydrolysis. Specifically binds to the 5'-CG-3' nucleotides of the repeats making up the packaging sequence. Component of the DEF-A and DEF-B transcription factors that bind downstream elements of the major late promoter (MLP), and stimulate transcription from the MLP after initiation of viral DNA replication. DEF-A is a heterodimer packaging proteins 1 and 2 and DEF-B is a homodimer of packaging protein 1. The sequence is that of Packaging protein 1 from Pantherophis guttatus (Corn snake).